Reading from the N-terminus, the 94-residue chain is uncharacterized protein (94 aa).

This is an uncharacterized protein from Escherichia coli (strain K12).